Consider the following 137-residue polypeptide: Glutamate mutase sigma subunit (137 aa).

The B12-binding domain occupies 3–137; the sequence is KKTIVLGVIG…ADLKEDLNIK (135 aa). Residues 13-17, His16, 61-63, and 93-97 each bind adenosylcob(III)alamin; these read SDCHA, SSL, and NIVVG.

This sequence belongs to the methylaspartate mutase GlmS subunit family. As to quaternary structure, heterotetramer composed of 2 epsilon subunits (GlmE) and 2 sigma subunits (GlmS). GlmE exists as a homodimer and GlmS as a monomer. It depends on adenosylcob(III)alamin as a cofactor.

It carries out the reaction (2S,3S)-3-methyl-L-aspartate = L-glutamate. It participates in amino-acid degradation; L-glutamate degradation via mesaconate pathway; acetate and pyruvate from L-glutamate: step 1/4. Its function is as follows. Catalyzes the carbon skeleton rearrangement of L-glutamate to L-threo-3-methylaspartate ((2S,3S)-3-methylaspartate). The chain is Glutamate mutase sigma subunit from Clostridium tetani (strain Massachusetts / E88).